We begin with the raw amino-acid sequence, 440 residues long: Chromosome partition protein MukF (440 aa).

The interval 208–236 (LSETSGTLRELQDTLEAAGDKLQANLLRI) is leucine-zipper.

Belongs to the MukF family. As to quaternary structure, interacts, and probably forms a ternary complex, with MukE and MukB via its C-terminal region. The complex formation is stimulated by calcium or magnesium. It is required for an interaction between MukE and MukB.

It localises to the cytoplasm. It is found in the nucleoid. Its function is as follows. Involved in chromosome condensation, segregation and cell cycle progression. May participate in facilitating chromosome segregation by condensation DNA from both sides of a centrally located replisome during cell division. Not required for mini-F plasmid partitioning. Probably acts via its interaction with MukB and MukE. Overexpression results in anucleate cells. It has a calcium binding activity. This chain is Chromosome partition protein MukF, found in Escherichia coli O17:K52:H18 (strain UMN026 / ExPEC).